A 676-amino-acid chain; its full sequence is MSKVYELVSEYQPSGDQPTAIKQLLEGLDAGLAHQTLLGVTGSGKTFTLANVIAQAQRPAILLAPNKTLAAQLYGEMKSFFPNNAVEYFVSYYDYYQPEAYVPTTDTFIEKDASVNAHIEQMRLSATKALLERKDAIIVASVSAIYGLGDPESYLQMMLHLRRGDVIDQRDMLRRLAELQYSRNDVAFERGQFRVRGEVIDIFPAESDQDAVRVEMFDDEVDCISVFDPLTGVVKQRDLPRYTIYPKTHYVTPRDRILEAIESIKVELEVRKKQLLENNKLIEEQRISQRTQFDIEMMNELGFCSGIENYSRYLSGRSEGEPPPTLFDYLPHDGLLIIDESHVTVPQIGAMYKGDRSRKETLVEFGFRLPSALDNRPLKFEEFESLAPQTIFVSATPGNYELEKSAGEIADQVVRPTGLLDPILEVRPVATQVDDLLSEIRIRAAKEERVLVTTLTKRMAEDLTEYLHEHDVRVRYLHSDIDTVERVEIIRDLRLGEFDVLVGINLLREGLDMPEVSLVAILDADKEGFLRSERSLIQTIGRAARNIEGKAILYADNITKSMKKAMDETNRRREKQQAYNEKMGITPQALKRNIKDIMELGDITKSKRQRNTKQVPLSKVAEPSQTYEVMSPQQLEKEISRLEAAMYQHAQDLEFELAAEKRDEIEKLRAQFIANS.

A Helicase ATP-binding domain is found at 26–414 (EGLDAGLAHQ…SAGEIADQVV (389 aa)). 39 to 46 (GVTGSGKT) contacts ATP. Residues 92-115 (YYDYYQPEAYVPTTDTFIEKDASV) carry the Beta-hairpin motif. A Helicase C-terminal domain is found at 432 to 598 (QVDDLLSEIR…ALKRNIKDIM (167 aa)). The 36-residue stretch at 636-671 (EKEISRLEAAMYQHAQDLEFELAAEKRDEIEKLRAQ) folds into the UVR domain.

The protein belongs to the UvrB family. In terms of assembly, forms a heterotetramer with UvrA during the search for lesions. Interacts with UvrC in an incision complex.

It localises to the cytoplasm. Its function is as follows. The UvrABC repair system catalyzes the recognition and processing of DNA lesions. A damage recognition complex composed of 2 UvrA and 2 UvrB subunits scans DNA for abnormalities. Upon binding of the UvrA(2)B(2) complex to a putative damaged site, the DNA wraps around one UvrB monomer. DNA wrap is dependent on ATP binding by UvrB and probably causes local melting of the DNA helix, facilitating insertion of UvrB beta-hairpin between the DNA strands. Then UvrB probes one DNA strand for the presence of a lesion. If a lesion is found the UvrA subunits dissociate and the UvrB-DNA preincision complex is formed. This complex is subsequently bound by UvrC and the second UvrB is released. If no lesion is found, the DNA wraps around the other UvrB subunit that will check the other stand for damage. The chain is UvrABC system protein B from Vibrio parahaemolyticus serotype O3:K6 (strain RIMD 2210633).